The following is a 158-amino-acid chain: MQIISNDEHELLTTSQIELVESILQHAAQLEGVEEPSELSVTYLTNAEIHEVNREWRGKDAPTDVISFAFDEMGDEEMDFMLDEDEPHLLGDLVISVERCREQAADYGHSFERELGFLAIHGFLHLLGYDHMTPEEEAEMTARQEEVLTHFELKRGNV.

Zn(2+)-binding residues include histidine 121, histidine 125, and histidine 131.

It belongs to the endoribonuclease YbeY family. Requires Zn(2+) as cofactor.

Its subcellular location is the cytoplasm. Single strand-specific metallo-endoribonuclease involved in late-stage 70S ribosome quality control and in maturation of the 3' terminus of the 16S rRNA. This Exiguobacterium sp. (strain ATCC BAA-1283 / AT1b) protein is Endoribonuclease YbeY.